The primary structure comprises 200 residues: MITVVLIFSAYLLGSISFAVVASWLFKLPDPRSYGSRNPGATNVLRTGKKAAAAVTLLGDAGKGWVAVAAAKYGGEVWELGDEVIAGAALAVFLGHLFPIFLAFKGGKGVATSAGILLGLNPWLGVLTISTWMVVALVSRISSLSALLSALLAPLYAYFLLEKGILIMAVSIISVLLILKHRLNIANLMAGKEARIGKSS.

4 helical membrane-spanning segments follow: residues 1–21 (MITVVLIFSAYLLGSISFAVV), 84–104 (VIAGAALAVFLGHLFPIFLAF), 116–136 (ILLGLNPWLGVLTISTWMVVA), and 159–179 (FLLEKGILIMAVSIISVLLIL).

Belongs to the PlsY family. In terms of assembly, probably interacts with PlsX.

It is found in the cell inner membrane. The enzyme catalyses an acyl phosphate + sn-glycerol 3-phosphate = a 1-acyl-sn-glycero-3-phosphate + phosphate. Its pathway is lipid metabolism; phospholipid metabolism. Catalyzes the transfer of an acyl group from acyl-phosphate (acyl-PO(4)) to glycerol-3-phosphate (G3P) to form lysophosphatidic acid (LPA). This enzyme utilizes acyl-phosphate as fatty acyl donor, but not acyl-CoA or acyl-ACP. This chain is Glycerol-3-phosphate acyltransferase, found in Nitrosomonas europaea (strain ATCC 19718 / CIP 103999 / KCTC 2705 / NBRC 14298).